We begin with the raw amino-acid sequence, 140 residues long: Baculoviral IAP repeat-containing protein 5 (140 aa).

The stretch at 18 to 88 (RIATFKNWPF…KHSPGCAFLT (71 aa)) is one BIR repeat. The residue at position 23 (lysine 23) is an N6-acetyllysine. Position 34 is a phosphothreonine; by CDK1 and CDK15 (threonine 34). Residue threonine 48 is modified to Phosphothreonine. Positions 57, 60, 76, 77, 80, and 84 each coordinate Zn(2+). Lysine 90, lysine 110, lysine 112, and lysine 115 each carry N6-acetyllysine. The span at 113–129 (IAKETNNKQKEFEETAK) shows a compositional bias: basic and acidic residues. The segment at 113–140 (IAKETNNKQKEFEETAKTTRQSIEQLAA) is disordered. A Phosphothreonine; by AURKB modification is found at threonine 117. Position 129 is an N6-acetyllysine (lysine 129). Polar residues predominate over residues 130–140 (TTRQSIEQLAA).

Belongs to the IAP family. In terms of assembly, monomer or homodimer. Exists as a homodimer in the apo state and as a monomer in the CPC-bound state. The monomer protects cells against apoptosis more efficiently than the dimer. Only the dimeric form is capable of enhancing tubulin stability in cells. When phosphorylated, interacts with LAMTOR5/HBXIP; the resulting complex binds pro-CASP9, as well as active CASP9, but much less efficiently. Component of the chromosomal passenger complex (CPC) composed of at least BIRC5/survivin, CDCA8/borealin, INCENP, AURKB or AURKC; in the complex forms a triple-helix bundle-based subcomplex with INCENP and CDCA8. Interacts with JTB. Interacts (via BIR domain) with histone H3 phosphorylated at 'Thr-3' (H3pT3). Interacts with EVI5. Interacts with GTP-bound RAN in both the S and M phases of the cell cycle. Interacts with USP9X. Interacts with tubulin. Interacts with BIRC2/c-IAP1. The acetylated form at Lys-129 interacts with STAT3. The monomeric form deacetylated at Lys-129 interacts with XPO1/CRM1. The monomeric form interacts with XIAP/BIRC4. Both the dimeric and monomeric form can interact with DIABLO/SMAC. Interacts with BIRC6/bruce. Interacts with FBXL7; this interaction facilitates the polyubiquitination and subsequent proteasomal degradation of BIRC5 by the SCF(FBXL7) E3 ubiquitin-protein ligase complex. Ubiquitinated by the Cul9-RING ubiquitin-protein ligase complex, leading to its degradation. Ubiquitination is required for centrosomal targeting. Deubiquitinated by USP35 or USP38; leading to stabilization. In terms of processing, acetylation at Lys-129 results in its homodimerization, while deacetylation promotes the formation of monomers which heterodimerize with XPO1/CRM1 which facilitates its nuclear export. The acetylated form represses STAT3 transactivation. The dynamic equilibrium between its acetylation and deacetylation at Lys-129 determines its interaction with XPO1/CRM1, its subsequent subcellular localization, and its ability to inhibit STAT3 transactivation. Post-translationally, in vitro phosphorylation at Thr-117 by AURKB prevents interaction with INCENP and localization to mitotic chromosomes. Phosphorylation at Thr-48 by CK2 is critical for its mitotic and anti-apoptotic activities. Phosphorylation at Thr-34 by CDK15 is critical for its anti-apoptotic activity.

It is found in the cytoplasm. The protein resides in the nucleus. It localises to the chromosome. The protein localises to the centromere. Its subcellular location is the cytoskeleton. It is found in the spindle. The protein resides in the kinetochore. It localises to the midbody. Its function is as follows. Multitasking protein that has dual roles in promoting cell proliferation and preventing apoptosis. Component of a chromosome passage protein complex (CPC) which is essential for chromosome alignment and segregation during mitosis and cytokinesis. Acts as an important regulator of the localization of this complex; directs CPC movement to different locations from the inner centromere during prometaphase to midbody during cytokinesis and participates in the organization of the center spindle by associating with polymerized microtubules. Involved in the recruitment of CPC to centromeres during early mitosis via association with histone H3 phosphorylated at 'Thr-3' (H3pT3) during mitosis. The complex with RAN plays a role in mitotic spindle formation by serving as a physical scaffold to help deliver the RAN effector molecule TPX2 to microtubules. May counteract a default induction of apoptosis in G2/M phase. The acetylated form represses STAT3 transactivation of target gene promoters. May play a role in neoplasia. Inhibitor of CASP3 and CASP7. Essential for the maintenance of mitochondrial integrity and function. The sequence is that of Baculoviral IAP repeat-containing protein 5 (Birc5) from Mus musculus (Mouse).